A 557-amino-acid chain; its full sequence is Potassium-transporting ATPase potassium-binding subunit (557 aa).

12 helical membrane passes run 5 to 25, 63 to 83, 132 to 152, 170 to 190, 253 to 273, 283 to 303, 329 to 349, 356 to 376, 379 to 399, 416 to 436, 484 to 504, and 526 to 546; these read GFLLIATFLLVLMVLARPLGS, LCAILGLNMLGLAVLFFMLLG, GLTVQNFLSAASGIAVIFALI, LLRITLWVLAPVALLIALFFI, FVQMLAIFLIPTALCFAFGEV, LLWAMSVIFVICVGVVMWAEV, VLVSSLFAVVTTAASCGAVIA, ALGGMVPMWLMQIGEVVFGGV, GLYGMMLFVLLAVFIAGLMIG, LTALAILVTPTLVLMGAALAM, LLALCMFVGRFGVIIPVMAIA, and LFVGLLIGTVLLVGALTFIPA.

This sequence belongs to the KdpA family. The system is composed of three essential subunits: KdpA, KdpB and KdpC.

Its subcellular location is the cell inner membrane. Part of the high-affinity ATP-driven potassium transport (or Kdp) system, which catalyzes the hydrolysis of ATP coupled with the electrogenic transport of potassium into the cytoplasm. This subunit binds the periplasmic potassium ions and delivers the ions to the membrane domain of KdpB through an intramembrane tunnel. This chain is Potassium-transporting ATPase potassium-binding subunit, found in Escherichia coli O81 (strain ED1a).